The chain runs to 335 residues: Abasic site processing protein HMCES (335 aa).

Cys2 functions as the Nucleophile in the catalytic mechanism. Cys2 bears the Thiazolidine linkage to a ring-opened DNA abasic site mark. Residues 24–39 show a composition bias toward basic and acidic residues; sequence QGGRKWPNWRDGDSDK. Residues 24–51 form a disordered region; sequence QGGRKWPNWRDGDSDKYQPSYNKSPQSN. A compositionally biased stretch (polar residues) spans 40-51; the sequence is YQPSYNKSPQSN. Residue Glu129 is part of the active site. Residues 284–335 are disordered; that stretch reads LQNKSPKKEESHSIQSPKLSQFGAPPKKTSAGLMQQWLKKEDGEPSPKRAKK. Residues 321–335 are compositionally biased toward basic and acidic residues; sequence LKKEDGEPSPKRAKK.

This sequence belongs to the SOS response-associated peptidase family. In terms of processing, ubiquitination of the hmces DNA-protein cross-link by rfwd3 may promotes its degradation.

It localises to the chromosome. Its activity is regulated as follows. Formation and reversal of DNA-protein cross-link depends on DNA context. Catalyzes formation of the thiazolidine linkage in presence of abasic sites in single-stranded DNA. Mediates the reversal of the thiazolidine cross-link in presence of double stranded DNA. Functionally, sensor of abasic sites in single-stranded DNA (ssDNA) required to preserve genome integrity by promoting error-free repair of abasic sites. Acts as an enzyme that recognizes and binds abasic sites in ssDNA at replication forks and chemically modifies the lesion by forming a covalent cross-link with DNA: forms a stable thiazolidine linkage between a ring-opened abasic site and the alpha-amino and sulfhydryl substituents of its N-terminal catalytic cysteine residue. The hmces DNA-protein cross-link is then either reversed or degraded. Hmces is able to catalyze the reversal of its thiazolidine cross-link and cycle between a cross-link and a non-cross-linked state depending on DNA context: mediates self-reversal of the thiazolidine cross-link in double stranded DNA, allowing apex1 to initiate downstream repair of abasic sites. The hmces DNA-protein cross-link can also be degraded by the sprtn metalloprotease following unfolding by the brip1/fancj helicase. Promotes error-free repair of abasic sites by protecting abasic sites from translesion synthesis (TLS) polymerases and endonucleases that are error-prone and would generate mutations and double-strand breaks. Acts as a protease: mediates autocatalytic processing of its N-terminal methionine in order to expose the catalytic cysteine. The hmces DNA-protein cross-link is then either reversed or degraded. According to a model, the HMCES DNA-protein cross-link. In Xenopus tropicalis (Western clawed frog), this protein is Abasic site processing protein HMCES.